Reading from the N-terminus, the 358-residue chain is WD repeat-containing protein 53 (358 aa).

WD repeat units lie at residues 8-46 (GHSS…LGHT), 92-131 (VNEE…ISRS), 134-174 (RHSN…PLWI), 195-234 (LNPA…CEQE), and 239-278 (GHSL…EKKH). Basic residues predominate over residues 278–294 (HKSPTKHTHRKKTKRAA). The disordered stretch occupies residues 278-309 (HKSPTKHTHRKKTKRAAYTKQGGGTHASVTGE).

Belongs to the WD repeat WDR53 family.

In Bos taurus (Bovine), this protein is WD repeat-containing protein 53 (WDR53).